Consider the following 65-residue polypeptide: Large ribosomal subunit protein bL35 (65 aa).

The protein belongs to the bacterial ribosomal protein bL35 family.

This is Large ribosomal subunit protein bL35 from Oleidesulfovibrio alaskensis (strain ATCC BAA-1058 / DSM 17464 / G20) (Desulfovibrio alaskensis).